A 375-amino-acid polypeptide reads, in one-letter code: ATP phosphoribosyltransferase regulatory subunit (375 aa).

This sequence belongs to the class-II aminoacyl-tRNA synthetase family. HisZ subfamily. Heteromultimer composed of HisG and HisZ subunits.

The protein resides in the cytoplasm. The protein operates within amino-acid biosynthesis; L-histidine biosynthesis; L-histidine from 5-phospho-alpha-D-ribose 1-diphosphate: step 1/9. Its function is as follows. Required for the first step of histidine biosynthesis. May allow the feedback regulation of ATP phosphoribosyltransferase activity by histidine. The chain is ATP phosphoribosyltransferase regulatory subunit from Agrobacterium fabrum (strain C58 / ATCC 33970) (Agrobacterium tumefaciens (strain C58)).